A 127-amino-acid chain; its full sequence is D-ribose pyranase (127 aa).

The Proton donor role is filled by His20. Substrate is bound by residues Asp28, His94, and 116–118 (YSN).

This sequence belongs to the RbsD / FucU family. RbsD subfamily. Homodecamer.

Its subcellular location is the cytoplasm. The enzyme catalyses beta-D-ribopyranose = beta-D-ribofuranose. The protein operates within carbohydrate metabolism; D-ribose degradation; D-ribose 5-phosphate from beta-D-ribopyranose: step 1/2. Catalyzes the interconversion of beta-pyran and beta-furan forms of D-ribose. The polypeptide is D-ribose pyranase (Cutibacterium acnes (strain DSM 16379 / KPA171202) (Propionibacterium acnes)).